The following is a 99-amino-acid chain: Evasin P1162 (99 aa).

Residues methionine 1–alanine 28 form the signal peptide. 3 disulfide bridges follow: cysteine 40–cysteine 59, cysteine 44–cysteine 61, and cysteine 55–cysteine 72. N-linked (GlcNAc...) asparagine glycosylation is found at asparagine 43, asparagine 49, asparagine 58, and asparagine 85.

The protein localises to the secreted. Its function is as follows. Salivary chemokine-binding protein which binds to host chemokines CXCL1, CXCL2, CXCL3, CXCL5 and CXCL8. This chain is Evasin P1162, found in Ixodes ricinus (Common tick).